The primary structure comprises 370 residues: Cyanuric acid amidohydrolase (370 aa).

The tract at residues 1-103 is RU A; the sequence is MQAQVFRVPM…TIFTVQKTDN (103 aa). Residues Arg51 and 82-83 contribute to the substrate site; that span reads SG. Residues 113 to 250 form an RU B region; the sequence is RLAVQQIFTR…NEIIVMGNSR (138 aa). Residue Lys163 is part of the active site. Substrate contacts are provided by residues Arg195 and 233–234; that span reads SA. The active-site Nucleophile is Ser233. The interval 256 to 370 is RU C; sequence LVIGHAEMKD…GPVAVIARTA (115 aa). A Mg(2+)-binding site is contributed by Glu303. Substrate contacts are provided by residues Arg330 and 349–350; that span reads SG. Residues Ser352, Gln355, Gly356, Pro357, and Gly360 each contribute to the Mg(2+) site.

This sequence belongs to the cyclic amide hydrolase (CyAH) family. As to quaternary structure, homotetramer.

The catalysed reaction is cyanurate + H2O = 1-carboxybiuret + H(+). The protein operates within xenobiotic degradation; atrazine degradation; biuret from cyanurate: step 1/1. Inhibited by barbituric acid. Responsible for the hydrolysis of cyanuric acid, an intermediate formed during catabolism of s-triazine based compounds in herbicides such as atrazine and polymers such as melamine. Catalyzes the hydrolytic opening of the s-triazine ring of cyanuric acid (2,4,6-trihydroxy-s-triazine) to yield carbon dioxide and carboxybiuret, which spontaneously decarboxylates to biuret. This is Cyanuric acid amidohydrolase (trzD) from Pseudomonas sp.